Reading from the N-terminus, the 254-residue chain is 5-oxoprolinase subunit A (254 aa).

Belongs to the LamB/PxpA family. Forms a complex composed of PxpA, PxpB and PxpC.

It catalyses the reaction 5-oxo-L-proline + ATP + 2 H2O = L-glutamate + ADP + phosphate + H(+). Its function is as follows. Catalyzes the cleavage of 5-oxoproline to form L-glutamate coupled to the hydrolysis of ATP to ADP and inorganic phosphate. In Bacillus mycoides (strain KBAB4) (Bacillus weihenstephanensis), this protein is 5-oxoprolinase subunit A.